Here is a 380-residue protein sequence, read N- to C-terminus: MSKNHEVYKDALPISLAYPLPPIILTNPLTWIPYIYRYLFRKTPRQVQWQCQLHESDLSCVVTDSEAIKKFWTSGFFGKGNLSRSEPTWHTRTKRSLGLLGFDEDLVAEEVTARRRFQRKQFKAQRAYRENRARERQLLLENGKPIPASLEEDAELPEYLTKSLKDFSRVSENPYHITSVPNVEHLQLTFPEAFFLASLGVLRINYENPNFELLPILKLFANIVANSVALTHDYSLQQSHEDPIIEPDNKFLTELAAYFYFRQQGWVVKNGTKFSVDFLLYKKGPVFSHAEFAILLIPCVGNKQKYNMQWHEVHCLNRVIAQVKKSLILCYVQCPSIEDFNKIWKNQASMNEWDWAESVLRQYLIRCVTLRRWVPSRNRD.

Active-site residues include Y281, H289, and K325.

This sequence belongs to the tRNA-intron endonuclease family. As to quaternary structure, heterotetramer composed of sen2, sen15, sen34 and sen54. Interacts directly with sen54.

It carries out the reaction pretRNA = a 3'-half-tRNA molecule with a 5'-OH end + a 5'-half-tRNA molecule with a 2',3'-cyclic phosphate end + an intron with a 2',3'-cyclic phosphate and a 5'-hydroxyl terminus.. In terms of biological role, constitutes one of the two catalytic subunit of the tRNA-splicing endonuclease complex, a complex responsible for identification and cleavage of the splice sites in pre-tRNA. It cleaves pre-tRNA at the 5'- and 3'-splice sites to release the intron. The products are an intron and two tRNA half-molecules bearing 2',3'-cyclic phosphate and 5'-OH termini. There are no conserved sequences at the splice sites, but the intron is invariably located at the same site in the gene, placing the splice sites an invariant distance from the constant structural features of the tRNA body. This subunit may anchor the endonuclease complex to the nuclear membrane. Probably carries the active site for 5'-splice site cleavage. This Schizosaccharomyces pombe (strain 972 / ATCC 24843) (Fission yeast) protein is Probable tRNA-splicing endonuclease subunit sen2 (sen2).